A 598-amino-acid chain; its full sequence is uncharacterized protein (598 aa).

At Ser-46 the chain carries Phosphoserine. One can recognise an SAC domain in the interval 106 to 441 (LQNHLKTGPF…ADYISLSYSG (336 aa)). 2 consecutive transmembrane segments (helical) span residues 508 to 528 (TIRCVPYILLACLILFFMTLF) and 535 to 555 (ILPPSILLILTFLGIVASLYY).

Its subcellular location is the endoplasmic reticulum membrane. This is an uncharacterized protein from Schizosaccharomyces pombe (strain 972 / ATCC 24843) (Fission yeast).